We begin with the raw amino-acid sequence, 261 residues long: Kallikrein 1-related peptidase b3 (261 aa).

A signal peptide spans 1–18; it reads MWFLILFLALSLGGIDAA. The propeptide at 19 to 24 is activation peptide; it reads PPVQSR. The segment B1 stretch occupies residues 25–107; it reads IVGGFKCEKN…HPGFNMSLMR (83 aa). Residues 25–258 form the Peptidase S1 domain; it reads IVGGFKCEKN…FTSWIKDTMA (234 aa). Disulfide bonds link cysteine 31/cysteine 173, cysteine 50/cysteine 66, cysteine 152/cysteine 219, cysteine 184/cysteine 198, and cysteine 209/cysteine 234. The active-site Charge relay system is the histidine 65. Asparagine 102 carries an N-linked (GlcNAc...) asparagine glycan. The segment C stretch occupies residues 112 to 164; that stretch reads FLEYDYSNDLMLLRLSKPADITDTVKPITLPTEEPKLGSTCLASGWGSITPTK. A segment A region spans residues 112–261; sequence FLEYDYSNDL…WIKDTMAKNP (150 aa). The active-site Charge relay system is aspartate 120. Positions 165-261 are segment B2; that stretch reads FQFTDDLYCV…WIKDTMAKNP (97 aa). The active-site Charge relay system is the serine 213. Histidine 231 and glutamate 236 together coordinate Zn(2+).

The protein belongs to the peptidase S1 family. Kallikrein subfamily. 7S nerve growth factor is composed of two alpha chains, a beta dimer composed of identical chains, and two gamma chains. Zn(2+) serves as cofactor.

It catalyses the reaction Preferential cleavage of Arg-|-Xaa bonds in small molecule substrates. Highly selective action to release kallidin (lysyl-bradykinin) from kininogen involves hydrolysis of Met-|-Xaa or Leu-|-Xaa.. Its function is as follows. 7S NGF alpha chain stabilizes the 7S complex. The beta dimer promotes neurite growth. The gamma chain is an arginine-specific protease; it may also have plasminogen activator activity, as well as mitogenic activity for chick embryo fibroblasts. The protein is Kallikrein 1-related peptidase b3 (Klk1b3) of Mus musculus (Mouse).